Consider the following 489-residue polypeptide: Dipeptide and tripeptide permease B (489 aa).

Residues 1–27 (MNTTTPMGMLQQPRPFFMIFFVELWER) lie on the Cytoplasmic side of the membrane. A helical transmembrane segment spans residues 28 to 48 (FGYYGVQGVLAVFFVKQLGFS). Over 49–52 (QEQA) the chain is Periplasmic. A helical membrane pass occupies residues 53-73 (FVTFGAFAALVYGLISIGGYV). At 74–82 (GDHLLGTKR) the chain is on the cytoplasmic side. A helical transmembrane segment spans residues 83-103 (TIVLGALVLAIGYFMTGLSLL). Topologically, residues 104–106 (KPD) are periplasmic. The helical transmembrane segment at 107–127 (LIFIALGTIAVGNGLFKANPA) threads the bilayer. Topologically, residues 128 to 146 (SLLSKCYPPKAPRLDGAFT) are cytoplasmic. Residues 147 to 167 (LFYMSINIGSLIALSLAPVIA) form a helical membrane-spanning segment. The Periplasmic segment spans residues 168-172 (DRFGY). A helical membrane pass occupies residues 173-193 (SVTYNLCGAGLIIALLVYIAC). Residues 194–210 (RGMVKDIGSEPDFRPMS) lie on the Cytoplasmic side of the membrane. Residues 211 to 231 (FSKLLYVLLGSVVMIFVCAWL) traverse the membrane as a helical segment. Residues 232–233 (MH) are Periplasmic-facing. Residues 234-254 (NVEVANLVLIVLSIVVTIIFF) traverse the membrane as a helical segment. Residues 255–267 (RQAFKLDKTGRNK) are Cytoplasmic-facing. A helical transmembrane segment spans residues 268–288 (MFVAFVLMLEAVVFYILYAQM). The Periplasmic portion of the chain corresponds to 289–311 (PTSLNFFAINNVHHEILGFSINP). A helical membrane pass occupies residues 312–332 (VSFQALNPFWVVLASPILAGI). Residues 333–350 (YTHLGSKGKDLSMPMKFT) are Cytoplasmic-facing. Residues 351 to 371 (LGMFMCSLGFLTAAAAGMWFA) traverse the membrane as a helical segment. Residues 372-380 (DAQGLTSPW) lie on the Periplasmic side of the membrane. The chain crosses the membrane as a helical span at residues 381-401 (FIVLVYLFQSLGELFISALGL). The Cytoplasmic portion of the chain corresponds to 402–411 (AMVAALVPQH). Residues 412-432 (LMGFILGISFLTQAAAFLLGG) traverse the membrane as a helical segment. Topologically, residues 433-456 (YVATFTAVPDNITDPLETLPVYTN) are periplasmic. A helical membrane pass occupies residues 457–477 (VFGKIGLVTLGVAVVMLLMVP). At 478–489 (WLKRMIAAPESH) the chain is on the cytoplasmic side.

Belongs to the major facilitator superfamily. Proton-dependent oligopeptide transporter (POT/PTR) (TC 2.A.17) family. DtpB subfamily.

The protein localises to the cell inner membrane. Proton-dependent permease that transports di- and tripeptides. The polypeptide is Dipeptide and tripeptide permease B (Shigella dysenteriae serotype 1 (strain Sd197)).